The sequence spans 334 residues: tRNA N6-adenosine threonylcarbamoyltransferase (334 aa).

The Fe cation site is built by His112 and His116. Substrate-binding positions include 135–139, Asp168, Gly181, Asp185, and Asn274; that span reads VVSGG. Residue Asp303 coordinates Fe cation.

The protein belongs to the KAE1 / TsaD family. Fe(2+) is required as a cofactor.

The protein resides in the cytoplasm. It carries out the reaction L-threonylcarbamoyladenylate + adenosine(37) in tRNA = N(6)-L-threonylcarbamoyladenosine(37) in tRNA + AMP + H(+). Its function is as follows. Required for the formation of a threonylcarbamoyl group on adenosine at position 37 (t(6)A37) in tRNAs that read codons beginning with adenine. Is involved in the transfer of the threonylcarbamoyl moiety of threonylcarbamoyl-AMP (TC-AMP) to the N6 group of A37, together with TsaE and TsaB. TsaD likely plays a direct catalytic role in this reaction. The protein is tRNA N6-adenosine threonylcarbamoyltransferase of Anaeromyxobacter dehalogenans (strain 2CP-1 / ATCC BAA-258).